Consider the following 116-residue polypeptide: Small ribosomal subunit protein bS16 (116 aa).

It belongs to the bacterial ribosomal protein bS16 family.

In Chlamydia trachomatis serovar L2 (strain ATCC VR-902B / DSM 19102 / 434/Bu), this protein is Small ribosomal subunit protein bS16.